A 161-amino-acid polypeptide reads, in one-letter code: Nucleotide-binding protein Rpic_2826 (161 aa).

This sequence belongs to the YajQ family.

Its function is as follows. Nucleotide-binding protein. The protein is Nucleotide-binding protein Rpic_2826 of Ralstonia pickettii (strain 12J).